The sequence spans 286 residues: NADP-dependent dehydrogenase clz5 (286 aa).

Residues Ser49, Leu51, Asp93, Tyr207, Lys211, Ile241, and Gln245 each coordinate NADP(+). The active-site Proton acceptor is Tyr207. Residue Tyr207 is the Proton donor of the active site. Lys211 serves as the catalytic Lowers pKa of active site Tyr.

It belongs to the short-chain dehydrogenases/reductases (SDR) family. As to quaternary structure, homodimer.

It localises to the cytoplasm. Its subcellular location is the cytosol. It functions in the pathway secondary metabolite biosynthesis. In terms of biological role, NADP-dependent dehydrogenase; part of the gene cluster that mediates the biosynthesis of squalestatin S1 (SQS1, also known as zaragozic acid A), a heavily oxidized fungal polyketide that offers potent cholesterol lowering activity by targeting squalene synthase (SS). SQS1 is composed of a 2,8-dioxobicyclic[3.2.1]octane-3,4,5-tricarboxyclic acid core that is connected to two lipophilic polyketide arms. These initial steps feature the priming of an unusual benzoic acid starter unit onto the highly reducing polyketide synthase clz14, followed by oxaloacetate extension and product release to generate a tricarboxylic acid containing product. The phenylalanine ammonia lyase (PAL) clz10 and the acyl-CoA ligase clz12 are involved in transforming phenylalanine into benzoyl-CoA. The citrate synthase-like protein clz17 is involved in connecting the C-alpha-carbons of the hexaketide chain and oxaloacetate to afford the tricarboxylic acid unit. The potential hydrolytic enzymes, clz11 and clz13, are in close proximity to pks2 and may participate in product release. On the other side, the tetraketide arm is synthesized by a the squalestatin tetraketide synthase clz2 and enzymatically esterified to the core in the last biosynthetic step, by the acetyltransferase clz6. The biosynthesis of the tetraketide must involve 3 rounds of chain extension. After the first and second rounds methyl-transfer occurs, and in all rounds of extension the ketoreductase and dehydratase are active. The enoyl reductase and C-MeT of clz2 are not active in the final round of extension. The acetyltransferase clz6 appears to have a broad substrate selectivity for its acyl CoA substrate, allowing the in vitro synthesis of novel squalestatins. The biosynthesis of SQS1 requires several oxidative steps likely performed by oxidoreductases clz3, clz15 and clz16. Finally, in support of the identification of the cluster as being responsible for SQS1 production, the cluster contains a gene encoding a putative squalene synthase (SS) clz20, suggesting a likely mechanism for self-resistance. The protein is NADP-dependent dehydrogenase clz5 of Cochliobolus lunatus (Filamentous fungus).